The sequence spans 305 residues: Mitochondrial uncoupling protein 3 (305 aa).

3 Solcar repeats span residues 14-100 (TRIL…LKGL), 112-204 (LPLA…AKHF), and 213-299 (DNIF…FRLL). A run of 6 helical transmembrane segments spans residues 16–36 (ILLA…IDLT), 69–89 (VIGL…YTPI), 118–138 (ALVG…ADLV), 178–198 (KGVL…LACY), 219–239 (TLAS…ADVV), and 272–292 (WKGF…FWVS).

It belongs to the mitochondrial carrier (TC 2.A.29) family.

Its subcellular location is the mitochondrion inner membrane. In terms of biological role, PUMPS are mitochondrial transporter proteins that create proton leaks across the inner mitochondrial membrane, thus uncoupling oxidative phosphorylation. This leads to a decrease in the efficiency of oxidative phosphorylation and an increase in heat production. May be involved in protecting plant cells against oxidative stress damage. The sequence is that of Mitochondrial uncoupling protein 3 (PUMP3) from Arabidopsis thaliana (Mouse-ear cress).